Reading from the N-terminus, the 40-residue chain is Photosystem II reaction center protein J (40 aa).

The chain crosses the membrane as a helical span at residues 8 to 28 (IPLWLIGTVTGIPVIGSIGIF).

It belongs to the PsbJ family. As to quaternary structure, PSII is composed of 1 copy each of membrane proteins PsbA, PsbB, PsbC, PsbD, PsbE, PsbF, PsbH, PsbI, PsbJ, PsbK, PsbL, PsbM, PsbT, PsbX, PsbY, PsbZ, Psb30/Ycf12, at least 3 peripheral proteins of the oxygen-evolving complex and a large number of cofactors. It forms dimeric complexes.

It localises to the plastid. The protein resides in the chloroplast thylakoid membrane. In terms of biological role, one of the components of the core complex of photosystem II (PSII). PSII is a light-driven water:plastoquinone oxidoreductase that uses light energy to abstract electrons from H(2)O, generating O(2) and a proton gradient subsequently used for ATP formation. It consists of a core antenna complex that captures photons, and an electron transfer chain that converts photonic excitation into a charge separation. In Chloranthus spicatus (Chulantree), this protein is Photosystem II reaction center protein J.